The chain runs to 91 residues: Probable Fe(2+)-trafficking protein (91 aa).

Belongs to the Fe(2+)-trafficking protein family.

Functionally, could be a mediator in iron transactions between iron acquisition and iron-requiring processes, such as synthesis and/or repair of Fe-S clusters in biosynthetic enzymes. The protein is Probable Fe(2+)-trafficking protein of Burkholderia multivorans (strain ATCC 17616 / 249).